A 497-amino-acid polypeptide reads, in one-letter code: Peptidoglycan endopeptidase RipA (497 aa).

A signal peptide spans 1 to 39 (MRRTVRALATRVHGRVCAVPLVVGMLLATALYGGGPAAA). Residues 177 to 192 (ARLAKEKADQAARDAE) show a composition bias toward basic and acidic residues. Disordered regions lie at residues 177–198 (ARLA…QDNA) and 253–297 (APAA…GQNW). The segment covering 255–273 (AAAPAPVPNSAPAPVPGAQ) has biased composition (pro residues). Residues 365-497 (REAVEYVIRR…TPYVTRLIEY (133 aa)) enclose the NlpC/P60 domain. Catalysis depends on Cys-408, which acts as the Nucleophile. Catalysis depends on His-457, which acts as the Proton acceptor. Glu-469 is an active-site residue.

The protein belongs to the peptidase C40 family. As to quaternary structure, monomer.

The protein localises to the secreted. Functionally, peptidoglycan endopeptidase that cleaves the bond between D-glutamate and meso-diaminopimelate. Binds and degrades high-molecular weight peptidoglycan. Required for normal separation of daughter cells after cell division and for cell wall integrity. The sequence is that of Peptidoglycan endopeptidase RipA (ripA) from Mycolicibacterium smegmatis (strain ATCC 700084 / mc(2)155) (Mycobacterium smegmatis).